Consider the following 925-residue polypeptide: Ubp5-interacting protein ftp105 (925 aa).

The segment covering 650–664 (EGSSDFESKSSDNTS) has biased composition (low complexity). The interval 650 to 671 (EGSSDFESKSSDNTSLDGTPLQ) is disordered.

It belongs to the hid-1 family. In terms of assembly, interacts with ubp5.

The protein localises to the cytoplasm. It localises to the golgi apparatus. Functionally, required for the localization of ubp5 to the Golgi apparatus. Involved in detoxification of cadmium ion. The chain is Ubp5-interacting protein ftp105 (ftp105) from Schizosaccharomyces pombe (strain 972 / ATCC 24843) (Fission yeast).